Here is a 159-residue protein sequence, read N- to C-terminus: Ribonuclease H (159 aa).

The RNase H type-1 domain occupies 8–150 (NLKEITMYTD…CDQLAVAAAK (143 aa)). The Mg(2+) site is built by D17, E55, D77, and D142.

The protein belongs to the RNase H family. As to quaternary structure, monomer. Mg(2+) serves as cofactor.

It localises to the cytoplasm. It catalyses the reaction Endonucleolytic cleavage to 5'-phosphomonoester.. Its function is as follows. Endonuclease that specifically degrades the RNA of RNA-DNA hybrids. In Desulforamulus reducens (strain ATCC BAA-1160 / DSM 100696 / MI-1) (Desulfotomaculum reducens), this protein is Ribonuclease H.